A 1297-amino-acid chain; its full sequence is Insulin receptor-related protein (1297 aa).

The N-terminal stretch at 1-26 (MAVPSLWPWGACLPVIFLSLGFGLDT) is a signal peptide. A glycan (N-linked (GlcNAc...) asparagine) is linked at Asn47. Intrachain disulfides connect Cys214-Cys222, Cys216-Cys228, Cys229-Cys237, Cys233-Cys246, Cys249-Cys258, Cys262-Cys274, Cys280-Cys300, Cys304-Cys317, and Cys320-Cys324. The N-linked (GlcNAc...) asparagine glycan is linked to Asn311. Residues Asn411, Asn492, Asn528, Asn616, and Asn634 are each glycosylated (N-linked (GlcNAc...) asparagine). 2 Fibronectin type-III domains span residues 483 to 603 (QTRT…TLPA) and 607 to 707 (VPQD…AQEA). Residues Cys657 and Cys864 are joined by a disulfide bond. Disordered regions lie at residues 666–687 (SNND…ESDC) and 732–758 (SINK…GNSS). Positions 675–685 (EDGDPEAEMES) are enriched in acidic residues. The Extracellular portion of the chain corresponds to 747–921 (AAGPLRLGGN…PEEEDAGGLH (175 aa)). 3 N-linked (GlcNAc...) asparagine glycosylation sites follow: Asn756, Asn885, and Asn898. The 96-residue stretch at 818–913 (IPGKVAWEAS…SVAFYILGPE (96 aa)) folds into the Fibronectin type-III 3 domain. Residues 922–943 (VLLTATPVGLTLLIVLAALGFF) traverse the membrane as a helical segment. Topologically, residues 944–1297 (YGKKRNRTLY…CSPQNGGPGH (354 aa)) are cytoplasmic. Positions 979–1254 (ISIIRELGQG…SIQEELRPSF (276 aa)) constitute a Protein kinase domain. ATP-binding positions include 985 to 993 (LGQGSFGMV) and Lys1013. Asp1115 functions as the Proton acceptor in the catalytic mechanism. 2 positions are modified to phosphotyrosine; by autocatalysis: Tyr1145 and Tyr1146. The disordered stretch occupies residues 1267 to 1297 (GARGSLPTTDAEPDSSPTPRDCSPQNGGPGH). A compositionally biased stretch (polar residues) spans 1281–1297 (SSPTPRDCSPQNGGPGH).

The protein belongs to the protein kinase superfamily. Tyr protein kinase family. Insulin receptor subfamily. Probable tetramer of 2 alpha and 2 beta chains linked by disulfide bonds. The alpha chains contribute to the formation of the ligand-binding domain, while the beta chains carry the kinase domain. Post-translationally, autophosphorylated on tyrosine residues between pH 7.9 and pH 10.5.

It is found in the membrane. The enzyme catalyses L-tyrosyl-[protein] + ATP = O-phospho-L-tyrosyl-[protein] + ADP + H(+). Receptor with tyrosine-protein kinase activity. Functions as a pH sensing receptor which is activated by increased extracellular pH. Activates an intracellular signaling pathway that involves IRS1 and AKT1/PKB. The chain is Insulin receptor-related protein (INSRR) from Homo sapiens (Human).